Reading from the N-terminus, the 435-residue chain is Legumain (435 aa).

A signal peptide spans 1-17; the sequence is MTWRVAVLLSLVLGAGA. Asparagine 93 is a glycosylation site (N-linked (GlcNAc...) asparagine). Histidine 150 is a catalytic residue. Residue asparagine 169 is glycosylated (N-linked (GlcNAc...) asparagine). The Nucleophile role is filled by cysteine 191. N-linked (GlcNAc...) asparagine glycosylation is found at asparagine 215, asparagine 265, and asparagine 274. A propeptide spanning residues 326-435 is cleaved from the precursor; that stretch reads NMKESQVLVG…AMDKVCLSHY (110 aa). Disulfide bonds link cysteine 380/cysteine 414 and cysteine 392/cysteine 431.

This sequence belongs to the peptidase C13 family. Homodimer before autocatalytic removal of the propeptide. Monomer after autocatalytic processing. May interact with integrins. Activated by autocatalytic processing at pH 4. In terms of tissue distribution, detected in kidney cortex (at protein level).

It is found in the lysosome. It catalyses the reaction Hydrolysis of proteins and small molecule substrates at -Asn-|-Xaa- bonds.. Functionally, has a strict specificity for hydrolysis of asparaginyl bonds. Can also cleave aspartyl bonds slowly, especially under acidic conditions. Involved in the processing of proteins for MHC class II antigen presentation in the lysosomal/endosomal system. Also involved in MHC class I antigen presentation in cross-presenting dendritic cells by mediating cleavage and maturation of Perforin-2 (MPEG1), thereby promoting antigen translocation in the cytosol. Required for normal lysosomal protein degradation in renal proximal tubules. Required for normal degradation of internalized EGFR. Plays a role in the regulation of cell proliferation via its role in EGFR degradation. This chain is Legumain (Lgmn), found in Rattus norvegicus (Rat).